Here is an 844-residue protein sequence, read N- to C-terminus: Leucine--tRNA ligase (844 aa).

Residues 39-49 carry the 'HIGH' region motif; that stretch reads PYPSGRIHMGH. Positions 621–625 match the 'KMSKS' region motif; sequence KMSKS. K624 contributes to the ATP binding site.

This sequence belongs to the class-I aminoacyl-tRNA synthetase family.

The protein resides in the cytoplasm. The catalysed reaction is tRNA(Leu) + L-leucine + ATP = L-leucyl-tRNA(Leu) + AMP + diphosphate. This is Leucine--tRNA ligase from Paracoccus denitrificans (strain Pd 1222).